A 263-amino-acid chain; its full sequence is Undecaprenyl-diphosphatase 2 (263 aa).

Helical transmembrane passes span 17-37 (TEFL…LIGF), 42-62 (AKVF…VIFW), 83-103 (LHII…HSAI), 106-126 (VLFG…LMIV), 142-162 (ITYK…WPGF), 183-203 (AEYT…LDLI), 216-236 (LFAT…VSFL), and 242-262 (VKLT…YFFI).

The protein belongs to the UppP family.

The protein resides in the cell membrane. It catalyses the reaction di-trans,octa-cis-undecaprenyl diphosphate + H2O = di-trans,octa-cis-undecaprenyl phosphate + phosphate + H(+). Its function is as follows. Catalyzes the dephosphorylation of undecaprenyl diphosphate (UPP). Confers resistance to bacitracin. The polypeptide is Undecaprenyl-diphosphatase 2 (Bacillus anthracis).